A 239-amino-acid polypeptide reads, in one-letter code: Lipoprotein-releasing system ATP-binding protein LolD (239 aa).

Residues 9–239 form the ABC transporter domain; that stretch reads LQVQHVSKHY…AATSPTGLAE (231 aa). An ATP-binding site is contributed by 45–52; that stretch reads GSSGSGKS.

It belongs to the ABC transporter superfamily. Lipoprotein translocase (TC 3.A.1.125) family. The complex is composed of two ATP-binding proteins (LolD) and two transmembrane proteins (LolC and LolE).

Its subcellular location is the cell inner membrane. Its function is as follows. Part of the ABC transporter complex LolCDE involved in the translocation of mature outer membrane-directed lipoproteins, from the inner membrane to the periplasmic chaperone, LolA. Responsible for the formation of the LolA-lipoprotein complex in an ATP-dependent manner. In Shewanella frigidimarina (strain NCIMB 400), this protein is Lipoprotein-releasing system ATP-binding protein LolD.